The sequence spans 269 residues: Interleukin-1 beta (269 aa).

Residues Met-1–Asp-112 constitute a propeptide that is removed on maturation.

Belongs to the IL-1 family. As to quaternary structure, monomer. In its precursor form, weakly interacts with full-length MEFV; the mature cytokine does not interact at all. Interacts with integrins ITGAV:ITGBV and ITGA5:ITGB1; integrin-binding is required for IL1B signaling. Interacts with cargo receptor TMED10; the interaction is direct and is required for the secretion of IL1B mature form. Interacts with HSP90AB1; the interaction facilitates cargo translocation into the ERGIC. Interacts with HSP90B1; the interaction facilitates cargo translocation into the ERGIC.

It localises to the cytoplasm. Its subcellular location is the cytosol. The protein localises to the secreted. The protein resides in the lysosome. It is found in the extracellular exosome. In terms of biological role, potent pro-inflammatory cytokine. Initially discovered as the major endogenous pyrogen, induces prostaglandin synthesis, neutrophil influx and activation, T-cell activation and cytokine production, B-cell activation and antibody production, and fibroblast proliferation and collagen production. Promotes Th17 differentiation of T-cells. Synergizes with IL12/interleukin-12 to induce IFNG synthesis from T-helper 1 (Th1) cells. Plays a role in angiogenesis by inducing VEGF production synergistically with TNF and IL6. Involved in transduction of inflammation downstream of pyroptosis: its mature form is specifically released in the extracellular milieu by passing through the gasdermin-D (GSDMD) pore. The polypeptide is Interleukin-1 beta (IL1B) (Trichosurus vulpecula (Brush-tailed possum)).